We begin with the raw amino-acid sequence, 287 residues long: 4-hydroxybenzoate octaprenyltransferase (287 aa).

8 helical membrane passes run 21–39 (PIGTLLLLWPTLWALWLAA), 95–115 (VLALFAVLALISFALVLTMNP), 116–136 (LTIGLSFAALLLAVCYPFMKR), 138–158 (IPIPQLVLGMAFSWSIPMAYA), 161–181 (ANALPAVAWLVFLANLLWTIA), 213–233 (IIGALQLLTLLILLLVGQLSE), 234–251 (LGSSYYWSLLAAAALFVY), and 264–284 (CFQAFLNNNYVGALIFAGVVI).

Belongs to the UbiA prenyltransferase family. The cofactor is Mg(2+).

It is found in the cell inner membrane. The catalysed reaction is all-trans-octaprenyl diphosphate + 4-hydroxybenzoate = 4-hydroxy-3-(all-trans-octaprenyl)benzoate + diphosphate. Its pathway is cofactor biosynthesis; ubiquinone biosynthesis. Functionally, catalyzes the prenylation of para-hydroxybenzoate (PHB) with an all-trans polyprenyl group. Mediates the second step in the final reaction sequence of ubiquinone-8 (UQ-8) biosynthesis, which is the condensation of the polyisoprenoid side chain with PHB, generating the first membrane-bound Q intermediate 3-octaprenyl-4-hydroxybenzoate. This chain is 4-hydroxybenzoate octaprenyltransferase, found in Aeromonas hydrophila subsp. hydrophila (strain ATCC 7966 / DSM 30187 / BCRC 13018 / CCUG 14551 / JCM 1027 / KCTC 2358 / NCIMB 9240 / NCTC 8049).